The chain runs to 173 residues: Siroheme decarboxylase alpha subunit (173 aa).

The substrate site is built by His-115 and Arg-119.

This sequence belongs to the Ahb/Nir family. As to quaternary structure, forms a heterodimer composed of AhbA and AhbB.

It carries out the reaction siroheme + 2 H(+) = 12,18-didecarboxysiroheme + 2 CO2. Its pathway is porphyrin-containing compound metabolism; protoheme biosynthesis. Functionally, involved in siroheme-dependent heme b biosynthesis. Catalyzes the decarboxylation of siroheme into didecarboxysiroheme. Siroheme is decarboxylated to monodecarboxysiroheme, which is in turn decarboxylated to didecarboxysiroheme. This chain is Siroheme decarboxylase alpha subunit, found in Desulfovibrio desulfuricans (strain ATCC 27774 / DSM 6949 / MB).